Here is a 467-residue protein sequence, read N- to C-terminus: Probable Xaa-Pro aminopeptidase pepP (467 aa).

Residues D264, D275, E398, and E438 each contribute to the Mn(2+) site.

It belongs to the peptidase M24B family. Requires Mn(2+) as cofactor.

It catalyses the reaction Release of any N-terminal amino acid, including proline, that is linked to proline, even from a dipeptide or tripeptide.. In terms of biological role, catalyzes the removal of a penultimate prolyl residue from the N-termini of peptides. The protein is Probable Xaa-Pro aminopeptidase pepP (pepP) of Neosartorya fischeri (strain ATCC 1020 / DSM 3700 / CBS 544.65 / FGSC A1164 / JCM 1740 / NRRL 181 / WB 181) (Aspergillus fischerianus).